The following is a 97-amino-acid chain: Serine protease inhibitor Kazal-type 13 (97 aa).

Residues 1-26 (MKRSGCWHQRMLLSLVLLTWTHVTFS) form the signal peptide. N-linked (GlcNAc...) asparagine glycosylation is present at N33. Residues 36-97 (RWPKPPCKMY…IQFVKYGKCE (62 aa)) enclose the Kazal-like domain. 3 disulfide bridges follow: C42-C78, C56-C75, and C64-C96.

It localises to the secreted. Its function is as follows. May be a serine protease inhibitor. Essential for sperm maturation and fertility. Inhibits sperm acrosome reaction, protecting sperm from premature reaction. In Mus musculus (Mouse), this protein is Serine protease inhibitor Kazal-type 13 (Spink13).